Here is a 546-residue protein sequence, read N- to C-terminus: Sterol O-acyltransferase 1 (546 aa).

M1 is subject to N-acetylmethionine. The disordered stretch occupies residues 1 to 37 (MVGEEKMSLRNRLSKSGENPEQDEAQRSVSDTQSNGR). Topologically, residues 1-134 (MVGEEKMSLR…LDELFEVDHI (134 aa)) are cytoplasmic. Position 8 is a phosphoserine (S8). Residues 27–37 (RSVSDTQSNGR) are compositionally biased toward polar residues. H133 provides a ligand contact to cholesterol. The chain crosses the membrane as a helical span at residues 135–156 (RTIYHMFIGLLILFILSTLVVD). Residues 157–176 (YIDEGRLVLEFNLLGYAFGK) lie on the Lumenal side of the membrane. The chain crosses the membrane as a helical span at residues 177–202 (LPTVIWTWWAMFLSTLSIPYFLFQRW). Over 203 to 214 (AHGYSKTSHPLI) the chain is Cytoplasmic. Residues 215 to 240 (YSLSHGFFFLVFQLGILGFVPTYVVL) traverse the membrane as a helical segment. Residues 241–248 (AYTLPPAS) lie on the Lumenal side of the membrane. A helical transmembrane segment spans residues 249 to 272 (RFIVILEQIRMVMKAHSFVRENVP). Residues 273–315 (RVLNAAKEKSSTVPVPTVNQYLYFLFAPTLIYRDSYPRTPTVR) are Cytoplasmic-facing. Residues 316–348 (WGYVAVQFLQVFGCLFYVYYIFERLCAPLFRNI) traverse the membrane as a helical segment. The Lumenal portion of the chain corresponds to 349-365 (KQEPFSARVLVLCVFNS). Residues 366–391 (ILPGVLMLFLTFFAFLHCWLNAFAEM) traverse the membrane as a helical segment. Residues 392 to 439 (LRFGDRMFYKDWWNSTSYSNYYRTWNVVVHDWLYYYAYKDLLWFFSKR) are Cytoplasmic-facing. The FYXDWWN motif signature appears at 399–405 (FYKDWWN). An acyl-CoA is bound by residues N411, R414, N417, H421, Y429, K441, and S452. A helical membrane pass occupies residues 440–464 (FKSAAMLAVFALSAVVHEYALAVCL). H456 is a catalytic residue. Residues 465–470 (SYFYPV) are Lumenal-facing. A helical membrane pass occupies residues 471–486 (LFVLFMFFGMAFNFIV). Over 487 to 492 (NDSRKR) the chain is Cytoplasmic. Residues 493-524 (PIWNIMVWASLFLGHGVILCFYSQEWYARQHC) form a helical membrane-spanning segment. Cysteines 524 and 542 form a disulfide. Topologically, residues 525–546 (PLKNPTFLDYVRPRSWTCQYVF) are lumenal.

The protein belongs to the membrane-bound acyltransferase family. Sterol o-acyltransferase subfamily. In terms of assembly, may form homo- or heterodimers. Interacts with UBIAD1.

It is found in the endoplasmic reticulum membrane. It catalyses the reaction a sterol + a long-chain fatty acyl-CoA = a long-chain 3-hydroxysterol ester + CoA. It carries out the reaction cholesterol + an acyl-CoA = a cholesterol ester + CoA. The catalysed reaction is cholesterol + (9Z)-octadecenoyl-CoA = cholesteryl (9Z-octadecenoate) + CoA. The enzyme catalyses cholesterol + hexadecanoyl-CoA = cholesteryl hexadecanoate + CoA. It catalyses the reaction octadecanoyl-CoA + cholesterol = cholesteryl octadecanoate + CoA. It carries out the reaction (9Z,12Z)-octadecadienoyl-CoA + cholesterol = cholesteryl (9Z,12Z)-octadecadienoate + CoA. The catalysed reaction is (5Z,8Z,11Z,14Z)-eicosatetraenoyl-CoA + cholesterol = cholesteryl (5Z,8Z,11Z,14Z)-eicosatetraenoate + CoA. The enzyme catalyses (9Z)-hexadecenoyl-CoA + cholesterol = cholesteryl (9Z)-hexadecenoate + CoA. It catalyses the reaction (11Z)-octadecenoyl-CoA + cholesterol = cholesteryl (11Z)-octadecenoate + CoA. It carries out the reaction (7Z)-octadecenoyl-CoA + cholesterol = cholesteryl (7Z)-octadecenoate + CoA. Functionally, catalyzes the formation of fatty acid-cholesterol esters, which are less soluble in membranes than cholesterol. Plays a role in lipoprotein assembly and dietary cholesterol absorption. Preferentially utilizes oleoyl-CoA ((9Z)-octadecenoyl-CoA) as a substrate: shows a higher activity towards an acyl-CoA substrate with a double bond at the delta-9 position (9Z) than towards saturated acyl-CoA or an unsaturated acyl-CoA with a double bond at the delta-7 (7Z) or delta-11 (11Z) positions. The protein is Sterol O-acyltransferase 1 (SOAT1) of Cricetulus griseus (Chinese hamster).